The following is a 471-amino-acid chain: UDP-glycosyltransferase 1 (471 aa).

The active-site Proton acceptor is H15. Residue H15 coordinates an anthocyanidin. The active-site Charge relay is D124. UDP-alpha-D-glucose-binding residues include T146, A348, Q350, H365, W368, N369, S370, and E373. Position 388 (A388) interacts with an anthocyanidin. Residues E389 and Q390 each contribute to the UDP-alpha-D-glucose site.

Belongs to the UDP-glycosyltransferase family. In terms of tissue distribution, expressed in roots. Detected in stems and leaves.

The catalysed reaction is a 7-hydroxyisoflavone + UDP-alpha-D-glucose = a 7-hydroxyisoflavone 7-O-beta-D-glucoside + UDP + H(+). Isoflavone 7-O-glucosyltransferase converting daidzein to daidzin, genistein to genistin and formononetin to ononin. Shows some activity toward the chalcone isoliquiritigenin, the flavanones liquiritigenin and naringenin, and the flavone apigenin, but not toward cyanidin, luteolin, kaempferol, quercetin, daidzin and puerarin. In Pueraria montana var. lobata (Kudzu vine), this protein is UDP-glycosyltransferase 1.